Consider the following 514-residue polypeptide: ATP synthase subunit alpha (514 aa).

G170–T177 provides a ligand contact to ATP.

The protein belongs to the ATPase alpha/beta chains family. As to quaternary structure, F-type ATPases have 2 components, CF(1) - the catalytic core - and CF(0) - the membrane proton channel. CF(1) has five subunits: alpha(3), beta(3), gamma(1), delta(1), epsilon(1). CF(0) has three main subunits: a(1), b(2) and c(9-12). The alpha and beta chains form an alternating ring which encloses part of the gamma chain. CF(1) is attached to CF(0) by a central stalk formed by the gamma and epsilon chains, while a peripheral stalk is formed by the delta and b chains.

The protein resides in the cell inner membrane. It catalyses the reaction ATP + H2O + 4 H(+)(in) = ADP + phosphate + 5 H(+)(out). Produces ATP from ADP in the presence of a proton gradient across the membrane. The alpha chain is a regulatory subunit. This Pseudomonas putida (strain GB-1) protein is ATP synthase subunit alpha.